The primary structure comprises 392 residues: Frizzled-9 (392 aa).

Residues 1 to 35 (ACDNPEKFQYVEKSLSCAPRCSPGVDVYWSREDKD) lie on the Extracellular side of the membrane. Residues 36 to 56 (FAFVWMAVWSTLCFVSTAFTV) traverse the membrane as a helical segment. Topologically, residues 57-72 (LTFLLDPHRFQYPERP) are cytoplasmic. The chain crosses the membrane as a helical span at residues 73–93 (IIFLSMCYNVYSVAFIIRSVA). Residues 94 to 119 (GAETIACDRENGELYIIQEGLESTGC) lie on the Extracellular side of the membrane. Residues 120–140 (TIVFLILYYFGMASSLWWVVL) traverse the membrane as a helical segment. The Cytoplasmic segment spans residues 141–161 (TLTWFLAAGKKWGHEAIEAHS). Residues 162-182 (SYFHMAAWGIPAMKTIVILTM) traverse the membrane as a helical segment. Residues 183-206 (RKVAGDELTGLCYVGSMDVSALTG) are Extracellular-facing. Residues 207–227 (FVLIPLSCYLVVGTSFILTGF) traverse the membrane as a helical segment. Residues 228-253 (VALFHIRKIMKTGGTNTEKLEKLMVK) are Cytoplasmic-facing. A helical membrane pass occupies residues 254-274 (IGVFSILYTVPATCVIVCYFY). The Extracellular segment spans residues 275 to 312 (ERLNVDYWNLRALERACVPLPGRRAADCSLEASVPTVA). Residues 313–333 (VFMLKIFMSLVVGITSGVWVW) form a helical membrane-spanning segment. At 334–392 (SSKTLQTWQSLCNRKLGVRTRGKPCSGVSCGGVHCHYKAPTVMLHMTKTDPYLDNPTHV) the chain is on the cytoplasmic side. Positions 336–341 (KTLQTW) match the Lys-Thr-X-X-X-Trp motif, mediates interaction with the PDZ domain of Dvl family members motif. Positions 390-392 (THV) match the PDZ-binding motif.

It belongs to the G-protein coupled receptor Fz/Smo family.

The protein localises to the cell membrane. Receptor for WNT2 that is coupled to the beta-catenin canonical signaling pathway, which leads to the activation of disheveled proteins, inhibition of GSK-3 kinase, nuclear accumulation of beta-catenin and activation of Wnt target genes. In Gallus gallus (Chicken), this protein is Frizzled-9 (FZD9).